The primary structure comprises 177 residues: Large ribosomal subunit protein bL9 (177 aa).

The disordered stretch occupies residues 151–177 (VEEEPAEEVEAPAETEVAEDAEEATEA).

It belongs to the bacterial ribosomal protein bL9 family.

In terms of biological role, binds to the 23S rRNA. In Maridesulfovibrio salexigens (strain ATCC 14822 / DSM 2638 / NCIMB 8403 / VKM B-1763) (Desulfovibrio salexigens), this protein is Large ribosomal subunit protein bL9.